The sequence spans 309 residues: Peptidyl-prolyl cis-trans isomerase 9 (309 aa).

The PPIase cyclophilin-type domain occupies 8-173 (FLDISVDENL…AKVLISNCGE (166 aa)). Basic and acidic residues-rich tracts occupy residues 217 to 229 (NEKK…DKRR), 239 to 265 (RSHE…RDEN), 280 to 289 (ERSATPEHWR), and 296 to 309 (WVHD…EDLV). Residues 217–309 (NEKKHEMRND…SHKHPEEDLV (93 aa)) are disordered.

The protein belongs to the cyclophilin-type PPIase family. Co-expressed with pdi-1 in the syncytial hypodermis.

It catalyses the reaction [protein]-peptidylproline (omega=180) = [protein]-peptidylproline (omega=0). In terms of biological role, PPIases accelerate the folding of proteins. It catalyzes the cis-trans isomerization of proline imidic peptide bonds in oligopeptides. Thought to function as a catalyst in the folding and modification of cuticle collagens. The polypeptide is Peptidyl-prolyl cis-trans isomerase 9 (cyn-9) (Caenorhabditis elegans).